A 319-amino-acid polypeptide reads, in one-letter code: FAD-dependent oxidoreductase FVFD30 (319 aa).

The FAD site is built by Arg-6, Asp-18, and Lys-25. NAD(+)-binding residues include Lys-129 and Gly-188. Residues Lys-129 and Gly-188 each coordinate NADP(+). FAD is bound by residues Asp-228 and Tyr-265. Asp-228 is a 6-hydroxy-FAD binding site. Residue Tyr-265 coordinates NAD(+). Tyr-265 is a binding site for NADP(+). A helical membrane pass occupies residues 281–301 (GVGYFGVWWGIVIGGWLASLL).

The protein belongs to the FAD-dependent oxidoreductase family.

Its subcellular location is the membrane. Its function is as follows. Probable FAD-dependent oxidoreductase that plays a role in the regulation of fruiting body development. In Flammulina velutipes (Agaricus velutipes), this protein is FAD-dependent oxidoreductase FVFD30.